A 402-amino-acid polypeptide reads, in one-letter code: Multidrug resistance protein MdtH (402 aa).

11 consecutive transmembrane segments (helical) span residues 13–33 (YFLLVDNMLVVLGFFVVFPLI), 34–54 (SIRFVDQMGWAALMVGIALGL), 99–116 (PWVLWLSCILSGLGGTLF), 139–159 (LLMMQDSAGAVIGALLGSWLL), 165–185 (LVCSAGAALFIACAAFNAWYL), 214–234 (VLTLTGYYMLAVQVMLMLPIM), 243–263 (AAVKWMYAIEATISLTLLYPI), 277–297 (LMAGLLVMTLAMLPIGMTSSL), 300–320 (LFTLICLFYIGSIIAEPARET), 340–360 (LGLAFGGALGYAGGGWLFDAG), and 368–388 (LPWLMLGAIGFITFLALWWQF).

This sequence belongs to the major facilitator superfamily. DHA1 family. MdtH (TC 2.A.1.2.21) subfamily.

It is found in the cell inner membrane. This is Multidrug resistance protein MdtH from Klebsiella pneumoniae (strain 342).